The following is a 403-amino-acid chain: Odorant receptor 43b (403 aa).

Topologically, residues 1-49 (MFGHFKLVYPAPISEPIQSRDSNAYMMETLRNSGLNLKNDFGIGRKIWR) are cytoplasmic. Residues 50–70 (VFSFTYNMVILPVSFPINYVI) traverse the membrane as a helical segment. At 71–83 (HLAEFPPELLLQS) the chain is on the extracellular side. The chain crosses the membrane as a helical span at residues 84–104 (LQLCLNTWCFALKFFTLIVYT). Residues 105–139 (HRLELANKHFDELDKYCVKPAEKRKVRDMVATITR) lie on the Cytoplasmic side of the membrane. Residues 140-160 (LYLTFVVVYVLYATSTLLDGL) form a helical membrane-spanning segment. Over 161–193 (LHHRVPYNTYYPFINWRVDRTQMYIQSFLEYFT) the chain is Extracellular. Residues 194-214 (VGYAIYVATATDSYPVIYVAA) traverse the membrane as a helical segment. The Cytoplasmic portion of the chain corresponds to 215-271 (LRTHILLLKDRIIYLGDPSNEGSSDPSYMFKSLVDCIKAHRTMLNFCDAIQPIISGT). A helical transmembrane segment spans residues 272 to 292 (IFAQFIICGSILGIIMINMVL). Over 293 to 299 (FADQSTR) the chain is Extracellular. A helical membrane pass occupies residues 300–320 (FGIVIYVMAVLLQTFPLCFYC). Topologically, residues 321-372 (NAIVDDCKELAHALFHSAWWVQDKRYQRTVIQFLQKLQQPMTFTAMNIFNIN) are cytoplasmic. Residues 373–393 (LATNINVAKFAFTVYAIASGM) traverse the membrane as a helical segment. Residues 394–403 (NLDQKLSIKE) lie on the Extracellular side of the membrane.

This sequence belongs to the insect chemoreceptor superfamily. Heteromeric odorant receptor channel (TC 1.A.69) family. Or2a subfamily. In terms of assembly, interacts with Orco. Complexes exist early in the endomembrane system in olfactory sensory neurons (OSNs), coupling these complexes to the conserved ciliary trafficking pathway. Expressed in 16 olfactory receptor neurons in a broad area across the antenna, including both anterior and posterior faces and in the maxillary palp. This expression pattern matches the distribution of the small sensilla basiconica. Expression in the antenna is observed late in antennal development at 93 hours APF.

The protein localises to the cell membrane. Its function is as follows. Odorant receptor which mediates acceptance or avoidance behavior, depending on its substrates. The odorant receptor repertoire encodes a large collection of odor stimuli that vary widely in identity, intensity, and duration. May form a complex with Orco to form odorant-sensing units, providing sensitive and prolonged odorant signaling and calcium permeability. This chain is Odorant receptor 43b (Or43b), found in Drosophila melanogaster (Fruit fly).